Consider the following 477-residue polypeptide: Glycogen synthase (477 aa).

Residue K15 participates in ADP-alpha-D-glucose binding.

It belongs to the glycosyltransferase 1 family. Bacterial/plant glycogen synthase subfamily.

The enzyme catalyses [(1-&gt;4)-alpha-D-glucosyl](n) + ADP-alpha-D-glucose = [(1-&gt;4)-alpha-D-glucosyl](n+1) + ADP + H(+). It functions in the pathway glycan biosynthesis; glycogen biosynthesis. Functionally, synthesizes alpha-1,4-glucan chains using ADP-glucose. The chain is Glycogen synthase from Streptococcus pneumoniae serotype 4 (strain ATCC BAA-334 / TIGR4).